Here is a 545-residue protein sequence, read N- to C-terminus: Chaperonin GroEL (545 aa).

ATP contacts are provided by residues 29–32 (TLGP), 86–90 (DGTTT), glycine 413, 476–478 (NAA), and aspartate 492.

Belongs to the chaperonin (HSP60) family. In terms of assembly, forms a cylinder of 14 subunits composed of two heptameric rings stacked back-to-back. Interacts with the co-chaperonin GroES.

It is found in the cytoplasm. It carries out the reaction ATP + H2O + a folded polypeptide = ADP + phosphate + an unfolded polypeptide.. Together with its co-chaperonin GroES, plays an essential role in assisting protein folding. The GroEL-GroES system forms a nano-cage that allows encapsulation of the non-native substrate proteins and provides a physical environment optimized to promote and accelerate protein folding. The chain is Chaperonin GroEL from Oceanobacillus iheyensis (strain DSM 14371 / CIP 107618 / JCM 11309 / KCTC 3954 / HTE831).